The following is a 558-amino-acid chain: Potassium-transporting ATPase potassium-binding subunit (558 aa).

Transmembrane regions (helical) follow at residues 1 to 21 (MDTL…VLIH), 59 to 79 (PAYL…VYGL), 85 to 105 (FLPY…NTAV), 130 to 150 (GLAV…IALV), 179 to 199 (LSLV…FAGF), 245 to 265 (PTAW…FSLP), 279 to 299 (TAIV…LTIF), 374 to 394 (GLYG…LLVG), 416 to 436 (ILVT…IPAV), 484 to 504 (ALGV…LALA), and 527 to 547 (FVGL…FPVL).

This sequence belongs to the KdpA family. In terms of assembly, the system is composed of three essential subunits: KdpA, KdpB and KdpC.

The protein resides in the cell membrane. In terms of biological role, part of the high-affinity ATP-driven potassium transport (or Kdp) system, which catalyzes the hydrolysis of ATP coupled with the electrogenic transport of potassium into the cytoplasm. This subunit binds the extracellular potassium ions and delivers the ions to the membrane domain of KdpB through an intramembrane tunnel. This Clavibacter michiganensis subsp. michiganensis (strain NCPPB 382) protein is Potassium-transporting ATPase potassium-binding subunit.